We begin with the raw amino-acid sequence, 360 residues long: Phospho-N-acetylmuramoyl-pentapeptide-transferase (360 aa).

The next 10 helical transmembrane spans lie at 18 to 38 (VFSY…VFSL), 73 to 93 (TMGG…WGDL), 97 to 117 (YVLV…IDDY), 134 to 154 (YILQ…SSTL), 168 to 188 (VMPQ…VGAS), 199 to 219 (GLAI…AYLS), 236 to 256 (AGEL…FLWF), 263 to 283 (VFMG…IAVL), 288 to 308 (ILLV…ILQV), and 338 to 358 (VIVR…ATLK).

Belongs to the glycosyltransferase 4 family. MraY subfamily. Mg(2+) serves as cofactor.

The protein localises to the cell inner membrane. It carries out the reaction UDP-N-acetyl-alpha-D-muramoyl-L-alanyl-gamma-D-glutamyl-meso-2,6-diaminopimeloyl-D-alanyl-D-alanine + di-trans,octa-cis-undecaprenyl phosphate = di-trans,octa-cis-undecaprenyl diphospho-N-acetyl-alpha-D-muramoyl-L-alanyl-D-glutamyl-meso-2,6-diaminopimeloyl-D-alanyl-D-alanine + UMP. Its pathway is cell wall biogenesis; peptidoglycan biosynthesis. Its function is as follows. Catalyzes the initial step of the lipid cycle reactions in the biosynthesis of the cell wall peptidoglycan: transfers peptidoglycan precursor phospho-MurNAc-pentapeptide from UDP-MurNAc-pentapeptide onto the lipid carrier undecaprenyl phosphate, yielding undecaprenyl-pyrophosphoryl-MurNAc-pentapeptide, known as lipid I. The chain is Phospho-N-acetylmuramoyl-pentapeptide-transferase from Shewanella denitrificans (strain OS217 / ATCC BAA-1090 / DSM 15013).